A 163-amino-acid chain; its full sequence is Putative pre-16S rRNA nuclease (163 aa).

This sequence belongs to the YqgF nuclease family.

Its subcellular location is the cytoplasm. Could be a nuclease involved in processing of the 5'-end of pre-16S rRNA. This chain is Putative pre-16S rRNA nuclease, found in Rhodopseudomonas palustris (strain BisA53).